Consider the following 88-residue polypeptide: Putative regulatory protein DvMF_1139 (88 aa).

This sequence belongs to the RemA family.

This is Putative regulatory protein DvMF_1139 from Nitratidesulfovibrio vulgaris (strain DSM 19637 / Miyazaki F) (Desulfovibrio vulgaris).